Here is a 397-residue protein sequence, read N- to C-terminus: Subtilisin-like protease 12 (397 aa).

Residues 1–19 form the signal peptide; that stretch reads MSIFKMMLIYFAILWVVNA. The propeptide occupies 20 to 116; it reads AQLLDIDPQG…VEPNKEMQVA (97 aa). Positions 35-115 constitute an Inhibitor I9 domain; that stretch reads YIVVMKDRVS…FVEPNKEMQV (81 aa). 3 N-linked (GlcNAc...) asparagine glycosylation sites follow: Asn123, Asn136, and Asn150. In terms of domain architecture, Peptidase S8 spans 125–397; the sequence is TWGLSRISHK…NKLLYNGSGA (273 aa). Catalysis depends on charge relay system residues Asp157 and His188. N-linked (GlcNAc...) asparagine glycosylation is found at Asn249, Asn305, and Asn334. Residue Ser343 is the Charge relay system of the active site. 2 N-linked (GlcNAc...) asparagine glycosylation sites follow: Asn385 and Asn393.

This sequence belongs to the peptidase S8 family.

The protein localises to the secreted. In terms of biological role, secreted subtilisin-like serine protease with keratinolytic activity that contributes to pathogenicity. The polypeptide is Subtilisin-like protease 12 (SUB12) (Trichophyton verrucosum (strain HKI 0517)).